A 1029-amino-acid chain; its full sequence is Toll-like receptor 9 (1029 aa).

The N-terminal stretch at 1–24 (MGPYCAPHPLSLLVQAAALAAALA) is a signal peptide. Residues 25–815 (QGTLPAFLPC…LCLDETLSLD (791 aa)) are Extracellular-facing. Residues Cys-34 and Cys-44 are joined by a disulfide bond. 46–50 (WLFLK) is a DNA binding site. LRR repeat units lie at residues 61–84 (RANVTSLSLISNRIHHLHDSDFVH), 86–109 (SNLRVLNLKWNCPPAGLSPMHFPC), 121–146 (VPTLEELNLSYNGITTVPALPSSLVS), 149–165 (LSRTSILVLGPTHFTGL), 166–189 (HALRFLYMDGNCYYKNPCQQAVEV), 197–220 (LGNLTHLSLKYNNLTEVPRRLPPS), 222–241 (DTLLLSYNHIITLAPEDLAN), 242–267 (LTALRVLDVGGNCRRCDHARNPCREC), 282–305 (LSRLEGLVLKDSSLYKLEKDWFRG), 307–331 (GRLQVLDLSENFLYDYITKTTIFRN), 332–355 (LTQLRRLNLSFNYHKKVSFAHLQL), 362–385 (LVSLEKLDMHGIFFRSLTNTTLRP), 389–412 (LPKLQSLSLQLNFINQAELSIFGA), 414–439 (PSLLFVDLSDNRISGAARPVAALGEV), 469–492 (CNLNFTLDLSRNNLVTIQQEMFTR), 494–517 (SRLQCLRLSHNSISQAVNGSQFVP), 518–541 (LTRLRVLDLSYNKLDLYHGRSFTE), 543–570 (PQLEALDLSYNSQPFSMQGVGHNLSFVA), 572–596 (LPSLRYLSLAHNGIHSRVSQKLSSA), 598–620 (LRALDFSGNSLSQMWAEGDLYLC), 625–648 (LRNLVQLDLSKNHLHTLLPRHLDN), 650–673 (PKSLRQLRLRDNNLAFFNWSSLTV), 674–697 (LPQLEALDLAGNQLKALSNGSLPP), 699–721 (TRLQKLDVSSNSIGFVTPGFFVL), 722–745 (ANRLKELNLSANALKTVDPFWFGR), and 747–770 (TETLKILDVSANPLHCACGAAFVD). N-linked (GlcNAc...) asparagine glycosylation occurs at Asn-63. DNA is bound by residues 71–76 (SNRIHH) and 94–108 (KWNCPPAGLSPMHFP). Residues Cys-97 and Cys-109 are joined by a disulfide bond. Asn-128 carries N-linked (GlcNAc...) asparagine glycosylation. DNA-binding positions include Tyr-131, Arg-151, and 178 to 180 (YYK). The cysteines at positions 177 and 183 are disulfide-linked. N-linked (GlcNAc...) asparagine glycosylation is present at Asn-199. Residue Tyr-207 coordinates DNA. 2 N-linked (GlcNAc...) asparagine glycosylation sites follow: Asn-209 and Asn-241. 2 cysteine pairs are disulfide-bonded: Cys-254-Cys-267 and Cys-257-Cys-264. Residue Cys-257 is the site of S-palmitoyl cysteine attachment. Residue Arg-261 participates in DNA binding. Cys-264 carries the S-palmitoyl cysteine lipid modification. 3 N-linked (GlcNAc...) asparagine glycosylation sites follow: Asn-331, Asn-339, and Asn-380. A disulfide bond links Cys-469 and Cys-498. 2 N-linked (GlcNAc...) asparagine glycosylation sites follow: Asn-472 and Asn-511. A glycan (N-linked (GlcNAc...) asparagine) is linked at Asn-565. N-linked (GlcNAc...) asparagine glycans are attached at residues Asn-667 and Asn-692. Residue Asn-729 is glycosylated (N-linked (GlcNAc...) asparagine). Disulfide bonds link Cys-762–Cys-788 and Cys-764–Cys-807. A helical transmembrane segment spans residues 816-836 (CFGFSLLMVALGLAVPMLHHL). Over 837–1029 (CGWDLWYCFH…NFCRGPTTAE (193 aa)) the chain is Cytoplasmic. The TIR domain maps to 864-1009 (LLYDAFVVFD…SFWANLGMAL (146 aa)).

It belongs to the Toll-like receptor family. In terms of assembly, monomer and homodimer. Exists as a monomer in the absence of unmethylated cytidine-phosphate-guanosine (CpG) ligand. Proteolytic processing of an insertion loop (Z-loop) is required for homodimerization upon binding to the unmethylated CpG ligand leading to its activation. Interacts with MYD88 via their respective TIR domains. Interacts with BTK. Interacts (via transmembrane domain) with UNC93B1. Interacts with CD300LH; the interaction may promote full activation of TLR9-triggered innate responses. Interacts with CNPY3 and HSP90B1; this interaction is required for proper folding in the endoplasmic reticulum. Interacts with SMPDL3B. Interacts with CD82; this interaction is essential for TLR9-dependent myddosome formation in response to CpG stimulation. Post-translationally, activated by proteolytic cleavage of the flexible loop between repeats LRR14 and LRR15 within the ectodomain. Cleavage requires UNC93B1. Proteolytically processed by first removing the majority of the ectodomain by either asparagine endopeptidase (AEP) or a cathepsin followed by a trimming event that is solely cathepsin mediated and required for optimal receptor signaling. Palmitoylated by ZDHHC3 in the Golgi regulates TLR9 trafficking from the Golgi to endosomes. Depalmitoylation by PPT1 controls the release of TLR9 from UNC93B1 in endosomes.

It localises to the endoplasmic reticulum membrane. The protein localises to the endosome. Its subcellular location is the lysosome. It is found in the cytoplasmic vesicle. The protein resides in the phagosome. In terms of biological role, key component of innate and adaptive immunity. TLRs (Toll-like receptors) control host immune response against pathogens through recognition of molecular patterns specific to microorganisms. TLR9 is a nucleotide-sensing TLR which is activated by unmethylated cytidine-phosphate-guanosine (CpG) dinucleotides. Acts via MYD88 and TRAF6, leading to NF-kappa-B activation, cytokine secretion and the inflammatory response. Upon CpG stimulation, induces B-cell proliferation, activation, survival and antibody production. This is Toll-like receptor 9 (TLR9) from Ovis aries (Sheep).